Reading from the N-terminus, the 92-residue chain is Small ribosomal subunit protein uS19c (92 aa).

Belongs to the universal ribosomal protein uS19 family.

The protein localises to the plastid. The protein resides in the chloroplast. Its function is as follows. Protein S19 forms a complex with S13 that binds strongly to the 16S ribosomal RNA. The sequence is that of Small ribosomal subunit protein uS19c from Nasturtium officinale (Watercress).